Consider the following 309-residue polypeptide: DnaJ-like protein MG002 homolog (309 aa).

One can recognise a J domain in the interval 1-66 (MTLYDLLELP…KAEYDAMLRF (66 aa)).

The polypeptide is DnaJ-like protein MG002 homolog (Mycoplasma pneumoniae (strain ATCC 29342 / M129 / Subtype 1) (Mycoplasmoides pneumoniae)).